A 222-amino-acid polypeptide reads, in one-letter code: N-(5'-phosphoribosyl)anthranilate isomerase (222 aa).

It belongs to the TrpF family.

It catalyses the reaction N-(5-phospho-beta-D-ribosyl)anthranilate = 1-(2-carboxyphenylamino)-1-deoxy-D-ribulose 5-phosphate. Its pathway is amino-acid biosynthesis; L-tryptophan biosynthesis; L-tryptophan from chorismate: step 3/5. This chain is N-(5'-phosphoribosyl)anthranilate isomerase, found in Symbiobacterium thermophilum (strain DSM 24528 / JCM 14929 / IAM 14863 / T).